Here is a 139-residue protein sequence, read N- to C-terminus: Diuretic hormone 41 (139 aa).

Positions 1–20 (MMWWALWCAVVVAAGSGVAA) are cleaved as a signal peptide. Positions 21–79 (APAPDSLSPLDMVQMDSSAPDDETLYAMSPMAARYSAGAPWLYLLADMPRDSQTGSGRV) are excised as a propeptide. Residue I122 is modified to Isoleucine amide.

It belongs to the sauvagine/corticotropin-releasing factor/urotensin I family. In terms of tissue distribution, expressed in corpora cardiaca (CC), corpora allata (CA), antennal lobe (AL) and gnathal ganglion (GNG) (at protein level). Expression in CC and CA detected in all animals, in GNG in most animals, expression in AL detected in few animals (at protein level).

It is found in the secreted. Its function is as follows. Regulation of fluid secretion. The sequence is that of Diuretic hormone 41 from Agrotis ipsilon (Black cutworm moth).